The primary structure comprises 217 residues: Cytidylate kinase (217 aa).

10–18 (GPAGAGKST) contributes to the ATP binding site.

This sequence belongs to the cytidylate kinase family. Type 1 subfamily.

Its subcellular location is the cytoplasm. It carries out the reaction CMP + ATP = CDP + ADP. The enzyme catalyses dCMP + ATP = dCDP + ADP. The chain is Cytidylate kinase from Clostridium botulinum (strain ATCC 19397 / Type A).